The sequence spans 574 residues: Glycine--tRNA ligase (574 aa).

Residues Arg-96 and Glu-162 each contribute to the substrate site. ATP-binding positions include 194-196 (RNE), 204-209 (IRLREF), 327-328 (EC), and 450-453 (GIDR). 209–213 (FTQAE) provides a ligand contact to substrate. 446 to 450 (EPSYG) is a substrate binding site.

It belongs to the class-II aminoacyl-tRNA synthetase family.

The protein localises to the cytoplasm. The enzyme catalyses tRNA(Gly) + glycine + ATP = glycyl-tRNA(Gly) + AMP + diphosphate. Catalyzes the attachment of glycine to tRNA(Gly). This is Glycine--tRNA ligase from Methanococcus maripaludis (strain DSM 14266 / JCM 13030 / NBRC 101832 / S2 / LL).